Consider the following 527-residue polypeptide: ATP synthase subunit alpha (527 aa).

169–176 (GDRQTGKT) serves as a coordination point for ATP.

This sequence belongs to the ATPase alpha/beta chains family. As to quaternary structure, F-type ATPases have 2 components, CF(1) - the catalytic core - and CF(0) - the membrane proton channel. CF(1) has five subunits: alpha(3), beta(3), gamma(1), delta(1), epsilon(1). CF(0) has three main subunits: a(1), b(2) and c(9-12). The alpha and beta chains form an alternating ring which encloses part of the gamma chain. CF(1) is attached to CF(0) by a central stalk formed by the gamma and epsilon chains, while a peripheral stalk is formed by the delta and b chains.

It localises to the cell membrane. It carries out the reaction ATP + H2O + 4 H(+)(in) = ADP + phosphate + 5 H(+)(out). Its function is as follows. Produces ATP from ADP in the presence of a proton gradient across the membrane. The alpha chain is a regulatory subunit. This chain is ATP synthase subunit alpha, found in Metamycoplasma arthritidis (strain 158L3-1) (Mycoplasma arthritidis).